The primary structure comprises 107 residues: Large ribosomal subunit protein uL24 (107 aa).

It belongs to the universal ribosomal protein uL24 family. Part of the 50S ribosomal subunit.

Functionally, one of two assembly initiator proteins, it binds directly to the 5'-end of the 23S rRNA, where it nucleates assembly of the 50S subunit. In terms of biological role, one of the proteins that surrounds the polypeptide exit tunnel on the outside of the subunit. The sequence is that of Large ribosomal subunit protein uL24 from Neisseria meningitidis serogroup C (strain 053442).